The sequence spans 316 residues: MATNKPANLNDLQKAINDISKDALKYLTDNKASVTTFHDQIGYAGYDAATLIGILKDKGGATLAQDVVKMIVMRYVRGTGFVKDVTKKTKATAGSEEAAALVARYGLVSSVGSNANAITLGRVAQLFPNVSFEVTKQFTGLKMAIDSSDLSMSGTDSLLWDFVPQYITLDSSSAPYCTTKSVAHILFSIHVIHAFLVTKKTMPEAKKKERGLLKDIDIIKYTTGLLVITCQSKNLNEAKKKSGRTKVCEPYCVNEKFKESFLALLASFGKNVVCSYGTQVKQFLAEQCSLMKTIVDNSSKTQDEMKALIIEFFEEE.

Tyr43, Tyr46, Val76, Arg122, and Lys240 together coordinate RNA.

The protein belongs to the tenuiviruses nucleocapsid protein family.

It is found in the virion. The protein resides in the host cytoplasm. Its function is as follows. Encapsidates the genome, protecting it from nucleases. The encapsidated genomic RNA is termed the nucleocapsid (NC), and serves as template for viral transcription and replication. This Maize stripe virus (MStV) protein is Nucleoprotein.